The primary structure comprises 310 residues: Putative integrase/recombinase y4rE (310 aa).

In terms of domain architecture, Core-binding (CB) spans 6–83 (RFLGEKVERY…VLRRFYEYLA (78 aa)). Positions 104 to 301 (PPPRILSEAE…SVDLLAMAAE (198 aa)) constitute a Tyr recombinase domain. Active-site residues include Arg-148, Lys-173, His-245, Arg-248, and His-279. Tyr-288 acts as the O-(3'-phospho-DNA)-tyrosine intermediate in catalysis.

This sequence belongs to the 'phage' integrase family.

The polypeptide is Putative integrase/recombinase y4rE (Sinorhizobium fredii (strain NBRC 101917 / NGR234)).